The following is a 401-amino-acid chain: Multidrug resistance protein MdtH (401 aa).

Transmembrane regions (helical) follow at residues 13–33, 34–54, 99–116, 139–159, 165–185, 214–234, 243–263, 277–297, 299–319, 340–360, and 368–388; these read YFLL…FPLI, SIRF…ALGL, PWIL…GTLF, LLMM…SWLL, FVCW…AWLL, VLTL…LPIV, AAVK…LYPL, LMAG…ITHL, TLFM…PARE, LGLA…YDTG, and LPWF…YWQF.

It belongs to the major facilitator superfamily. DHA1 family. MdtH (TC 2.A.1.2.21) subfamily.

The protein resides in the cell inner membrane. In Yersinia pseudotuberculosis serotype O:1b (strain IP 31758), this protein is Multidrug resistance protein MdtH.